Reading from the N-terminus, the 258-residue chain is Clathrin light chain 3 (258 aa).

The segment covering 1–18 (MSSTLSNEESGLGDSNRS) has biased composition (polar residues). A disordered region spans residues 1–96 (MSSTLSNEES…PPPSAMEKEE (96 aa)). Serine 2 bears the N-acetylserine mark. The span at 34-50 (SRFQSQRFDSSFSNFDS) shows a compositional bias: low complexity. The span at 66–79 (RPETQSPPSINSFD) shows a compositional bias: polar residues. The tract at residues 90 to 152 (SAMEKEEGFA…TIENNKKLNR (63 aa)) is involved in binding clathrin heavy chain. Residues 105–164 (RLNALRLEEKEKEEKEMVQQILEAAEQYKAEFYSKRNVTIENNKKLNREKEKFFLENQEK) are a coiled coil. Over residues 224–234 (LKHNPPTHMKP) the composition is skewed to basic residues. The interval 224 to 258 (LKHNPPTHMKPKLPSPSGADPNVSVSEQVTVTEKL) is disordered. A compositionally biased stretch (polar residues) spans 246-258 (VSVSEQVTVTEKL).

It belongs to the clathrin light chain family. In terms of assembly, clathrin coats are formed from molecules containing 3 heavy chains and 3 light chains.

Its subcellular location is the cytoplasmic vesicle membrane. It localises to the membrane. It is found in the coated pit. In terms of biological role, clathrin is the major protein of the polyhedral coat of coated pits and vesicles. The chain is Clathrin light chain 3 from Arabidopsis thaliana (Mouse-ear cress).